The following is a 275-amino-acid chain: Large ribosomal subunit protein uL2 (275 aa).

Disordered regions lie at residues 28–59 and 224–275; these read KPFA…GGHK and AMNP…RHKR. Over residues 35 to 49 the composition is skewed to polar residues; that stretch reads DSQSTTAGRNNNGHI. Basic residues predominate over residues 50–59; sequence TTRHKGGGHK.

Belongs to the universal ribosomal protein uL2 family. In terms of assembly, part of the 50S ribosomal subunit. Forms a bridge to the 30S subunit in the 70S ribosome.

Its function is as follows. One of the primary rRNA binding proteins. Required for association of the 30S and 50S subunits to form the 70S ribosome, for tRNA binding and peptide bond formation. It has been suggested to have peptidyltransferase activity; this is somewhat controversial. Makes several contacts with the 16S rRNA in the 70S ribosome. The chain is Large ribosomal subunit protein uL2 from Paraburkholderia xenovorans (strain LB400).